Here is a 121-residue protein sequence, read N- to C-terminus: Small ribosomal subunit protein uS13 (121 aa).

The segment at 93–121 (RGLPVRGQNTKNNARTRKGPRRTVANKKK) is disordered. The segment covering 106–121 (ARTRKGPRRTVANKKK) has biased composition (basic residues).

The protein belongs to the universal ribosomal protein uS13 family. Part of the 30S ribosomal subunit. Forms a loose heterodimer with protein S19. Forms two bridges to the 50S subunit in the 70S ribosome.

Functionally, located at the top of the head of the 30S subunit, it contacts several helices of the 16S rRNA. In the 70S ribosome it contacts the 23S rRNA (bridge B1a) and protein L5 of the 50S subunit (bridge B1b), connecting the 2 subunits; these bridges are implicated in subunit movement. Contacts the tRNAs in the A and P-sites. This chain is Small ribosomal subunit protein uS13, found in Bacillus licheniformis (strain ATCC 14580 / DSM 13 / JCM 2505 / CCUG 7422 / NBRC 12200 / NCIMB 9375 / NCTC 10341 / NRRL NRS-1264 / Gibson 46).